Here is a 301-residue protein sequence, read N- to C-terminus: Mas-related G-protein coupled receptor member A6 (301 aa).

The Extracellular portion of the chain corresponds to 1–15 (MHRSISIRILITNLM). The chain crosses the membrane as a helical span at residues 16–36 (IVILGLVGLTGNAIVFWLLLF). The Cytoplasmic portion of the chain corresponds to 37 to 42 (RLRRNA). A helical membrane pass occupies residues 43-63 (FSIYILNLALADFLFLLCHII). At 64–77 (ASTEHILTFSSPNS) the chain is on the extracellular side. Residues 78-98 (IFINCLYTFRVLLYIAGLNML) form a helical membrane-spanning segment. Topologically, residues 99–128 (SAISIERCLSVMCPIWYRCHRPEHTSTVMC) are cytoplasmic. Residues 129 to 149 (AMIWVLSLLLCILYRYFCGFL) traverse the membrane as a helical segment. The Extracellular segment spans residues 150 to 163 (DTKYEDDYGCLAMN). A helical transmembrane segment spans residues 164–184 (FLTTAYLMFLFVVLCVSSLAL). Topologically, residues 185–203 (LARLFCGAGRMKLTRLYVT) are cytoplasmic. A helical membrane pass occupies residues 204-224 (ITLTLLVFLLCGLPCGFYWFL). Residues 225–240 (LSKIKNVFSVFEFSLY) lie on the Extracellular side of the membrane. Residues 241 to 261 (LTSVVLTAINSCANPIIYFFV) form a helical membrane-spanning segment. Residues 262-301 (GSFRHRLKHQTLKMVLQSALQDTPETPENMVEMSRNKAEL) lie on the Cytoplasmic side of the membrane.

Belongs to the G-protein coupled receptor 1 family. Mas subfamily. Expressed in a subset of sensory neurons that includes nociceptors. Expressed in the subclass of non-peptidergic sensory neurons that are IB4(+) and VR1(-).

The protein resides in the cell membrane. Functionally, orphan receptor. May be a receptor for RFamide-family neuropeptides such as NPFF and NPAF, which are analgesic in vivo. May regulate nociceptor function and/or development, including the sensation or modulation of pain. This chain is Mas-related G-protein coupled receptor member A6 (Mrgpra6), found in Mus musculus (Mouse).